The sequence spans 491 residues: Glutamyl-tRNA(Gln) amidotransferase subunit A (491 aa).

Catalysis depends on charge relay system residues K76 and S154. The Acyl-ester intermediate role is filled by S178.

This sequence belongs to the amidase family. GatA subfamily. Heterotrimer of A, B and C subunits.

It carries out the reaction L-glutamyl-tRNA(Gln) + L-glutamine + ATP + H2O = L-glutaminyl-tRNA(Gln) + L-glutamate + ADP + phosphate + H(+). Its function is as follows. Allows the formation of correctly charged Gln-tRNA(Gln) through the transamidation of misacylated Glu-tRNA(Gln) in organisms which lack glutaminyl-tRNA synthetase. The reaction takes place in the presence of glutamine and ATP through an activated gamma-phospho-Glu-tRNA(Gln). The protein is Glutamyl-tRNA(Gln) amidotransferase subunit A of Cereibacter sphaeroides (strain ATCC 17029 / ATH 2.4.9) (Rhodobacter sphaeroides).